A 257-amino-acid chain; its full sequence is Thiazole synthase (257 aa).

Lys96 serves as the catalytic Schiff-base intermediate with DXP. 1-deoxy-D-xylulose 5-phosphate contacts are provided by residues Gly157, 184–185, and 206–207; these read AG and NT.

Belongs to the ThiG family. Homotetramer. Forms heterodimers with either ThiH or ThiS.

The protein localises to the cytoplasm. It catalyses the reaction [ThiS sulfur-carrier protein]-C-terminal-Gly-aminoethanethioate + 2-iminoacetate + 1-deoxy-D-xylulose 5-phosphate = [ThiS sulfur-carrier protein]-C-terminal Gly-Gly + 2-[(2R,5Z)-2-carboxy-4-methylthiazol-5(2H)-ylidene]ethyl phosphate + 2 H2O + H(+). The protein operates within cofactor biosynthesis; thiamine diphosphate biosynthesis. Catalyzes the rearrangement of 1-deoxy-D-xylulose 5-phosphate (DXP) to produce the thiazole phosphate moiety of thiamine. Sulfur is provided by the thiocarboxylate moiety of the carrier protein ThiS. In vitro, sulfur can be provided by H(2)S. The chain is Thiazole synthase from Allorhizobium ampelinum (strain ATCC BAA-846 / DSM 112012 / S4) (Agrobacterium vitis (strain S4)).